The following is a 212-amino-acid chain: Thymidylate kinase (212 aa).

10–17 (GLEGAGKT) contributes to the ATP binding site.

The protein belongs to the thymidylate kinase family.

It catalyses the reaction dTMP + ATP = dTDP + ADP. Phosphorylation of dTMP to form dTDP in both de novo and salvage pathways of dTTP synthesis. The polypeptide is Thymidylate kinase (Yersinia enterocolitica serotype O:8 / biotype 1B (strain NCTC 13174 / 8081)).